The sequence spans 177 residues: MAAEKVREIEVPQGVTVTVSGATLTTKGQKGQISREFRFPGISVRTDGGKVIVETGKDDKQTKATVGTYASHIKNMMTGVSEGYEYHMKIVYAHFPIQVKVEGKDKVTIGNFLGERKARTANIVGETKVTVQGDKVVLTGINKEDLGQTAANIEQACRIRKRDPRVFQDGIYITSKA.

The protein belongs to the universal ribosomal protein uL6 family. Part of the 50S ribosomal subunit.

Its function is as follows. This protein binds to the 23S rRNA, and is important in its secondary structure. It is located near the subunit interface in the base of the L7/L12 stalk, and near the tRNA binding site of the peptidyltransferase center. In Methanocella arvoryzae (strain DSM 22066 / NBRC 105507 / MRE50), this protein is Large ribosomal subunit protein uL6.